The chain runs to 164 residues: UPF0114 protein BCI_0033 (164 aa).

3 helical membrane-spanning segments follow: residues 15–35, 53–73, and 136–156; these read LLFP…LKFF, LILI…LVMV, and IMWC…MAYI.

This sequence belongs to the UPF0114 family.

Its subcellular location is the cell membrane. The polypeptide is UPF0114 protein BCI_0033 (Baumannia cicadellinicola subsp. Homalodisca coagulata).